Reading from the N-terminus, the 663-residue chain is DNA topoisomerase 4 subunit B (663 aa).

ATP contacts are provided by residues Tyr-7, Asn-47, Asp-74, 114 to 120, and Lys-341; that span reads GLHGVGA. The segment at 386 to 416 is disordered; the sequence is REAARKAREDARSGKKNKRKDTLLSGKLTPA. Residues 387–398 show a composition bias toward basic and acidic residues; it reads EAARKAREDARS. The Toprim domain occupies 424-538; the sequence is NELYLVEGDS…ADRVFIALPP (115 aa). Residues Glu-430, Asp-503, and Asp-505 each coordinate Mg(2+).

This sequence belongs to the type II topoisomerase family. ParE type 2 subfamily. As to quaternary structure, heterotetramer composed of ParC and ParE. Requires Mg(2+) as cofactor. Mn(2+) is required as a cofactor. The cofactor is Ca(2+).

The catalysed reaction is ATP-dependent breakage, passage and rejoining of double-stranded DNA.. Topoisomerase IV is essential for chromosome segregation. It relaxes supercoiled DNA. Performs the decatenation events required during the replication of a circular DNA molecule. The sequence is that of DNA topoisomerase 4 subunit B from Staphylococcus aureus (strain MSSA476).